A 266-amino-acid chain; its full sequence is MAPVPEPINEMMAYYSDENELLFEADGPKQMKSCIQHLDLGSVEVGNIQLQISHQLYNKSFRQVVSVIVAMEKLRNSAYAHVFHDDDLRNVLSFIFEEEPVIFETSSDEFLCDAAVQSVNCKLQDREQNSLVLASPCVLKALHLLSQEMSREVVFCMSFVQAEERDNKIPVALGIRDKNQYLSCVKKGDTPTLQLEEVDPKVYPKRNMEKRFVFYKTEIKDTVEFESVLYPNWYISTSHPEEKPVFLGHFRGGQDITDFRMETLSP.

The propeptide occupies 1-113; the sequence is MAPVPEPINE…ETSSDEFLCD (113 aa).

This sequence belongs to the IL-1 family. Monomer. In its precursor form, weakly interacts with full-length MEFV; the mature cytokine does not interact at all. Interacts with integrins ITGAV:ITGBV and ITGA5:ITGB1; integrin-binding is required for IL1B signaling. Interacts with cargo receptor TMED10; the interaction is direct and is required for the secretion of IL1B mature form. Interacts with HSP90AB1; the interaction facilitates cargo translocation into the ERGIC. Interacts with HSP90B1; the interaction facilitates cargo translocation into the ERGIC.

It localises to the cytoplasm. Its subcellular location is the cytosol. The protein resides in the secreted. The protein localises to the lysosome. It is found in the extracellular exosome. Potent pro-inflammatory cytokine. Initially discovered as the major endogenous pyrogen, induces prostaglandin synthesis, neutrophil influx and activation, T-cell activation and cytokine production, B-cell activation and antibody production, and fibroblast proliferation and collagen production. Promotes Th17 differentiation of T-cells. Synergizes with IL12/interleukin-12 to induce IFNG synthesis from T-helper 1 (Th1) cells. Plays a role in angiogenesis by inducing VEGF production synergistically with TNF and IL6. Involved in transduction of inflammation downstream of pyroptosis: its mature form is specifically released in the extracellular milieu by passing through the gasdermin-D (GSDMD) pore. The protein is Interleukin-1 beta (IL1B) of Cervus elaphus (Red deer).